The sequence spans 247 residues: MSVDKEELVQRAKLAEQAERYDDMAAAMKEVTETGVELSNEERNLLSVAYKNVVGARRSSWRVISSIEQKTEGSERKQQMAKEYRVKVEKELREICYDVLGLLDKHLIPKASNPESKVFYLKMKGDYYRYLAEVATGETRHSVVEDSQKAYQDAFEISKAKMQPTHPIRLGLALNFSVFYYEILNSPDKACQLAKQAFDDAIAELDTLNEDSYKDSTLIMQLLRDNLTLWTSDTQGDGDEPAEGGDN.

The protein belongs to the 14-3-3 family. Homodimer.

Its subcellular location is the cytoplasm. Functionally, adapter protein implicated in the regulation of a large spectrum of both general and specialized signaling pathways. Binds to a large number of partners, usually by recognition of a phosphoserine or phosphothreonine motif. Binding generally results in the modulation of the activity of the binding partner. The polypeptide is 14-3-3 protein zeta (14-3-3zeta) (Bombyx mori (Silk moth)).